The primary structure comprises 207 residues: Putative 3-methyladenine DNA glycosylase (207 aa).

The protein belongs to the DNA glycosylase MPG family.

The sequence is that of Putative 3-methyladenine DNA glycosylase from Burkholderia lata (strain ATCC 17760 / DSM 23089 / LMG 22485 / NCIMB 9086 / R18194 / 383).